A 499-amino-acid chain; its full sequence is Glycerol kinase (499 aa).

T13 lines the ADP pocket. ATP contacts are provided by T13, T14, and S15. A sn-glycerol 3-phosphate-binding site is contributed by T13. Position 17 (R17) interacts with ADP. Sn-glycerol 3-phosphate is bound by residues R83, E84, Y135, and D245. Positions 83, 84, 135, 245, and 246 each coordinate glycerol. ADP-binding residues include T267 and G310. 4 residues coordinate ATP: T267, G310, Q314, and A411. Positions 411 and 415 each coordinate ADP.

The protein belongs to the FGGY kinase family.

It catalyses the reaction glycerol + ATP = sn-glycerol 3-phosphate + ADP + H(+). It functions in the pathway polyol metabolism; glycerol degradation via glycerol kinase pathway; sn-glycerol 3-phosphate from glycerol: step 1/1. With respect to regulation, inhibited by fructose 1,6-bisphosphate (FBP). Functionally, key enzyme in the regulation of glycerol uptake and metabolism. Catalyzes the phosphorylation of glycerol to yield sn-glycerol 3-phosphate. In Xylella fastidiosa (strain 9a5c), this protein is Glycerol kinase.